The following is a 298-amino-acid chain: Protease HtpX homolog (298 aa).

2 helical membrane-spanning segments follow: residues 14–34 (VVLL…AGYL) and 39–59 (YAMG…SMIF). Zn(2+) is bound at residue histidine 143. Residue glutamate 144 is part of the active site. Histidine 147 provides a ligand contact to Zn(2+). 2 helical membrane-spanning segments follow: residues 158-178 (IAVA…RMLW) and 197-217 (IITL…ASLI). Zn(2+) is bound at residue glutamate 226.

It belongs to the peptidase M48B family. The cofactor is Zn(2+).

Its subcellular location is the cell membrane. This is Protease HtpX homolog from Streptococcus pyogenes serotype M28 (strain MGAS6180).